We begin with the raw amino-acid sequence, 538 residues long: Putative outer membrane porin BglH (538 aa).

The signal sequence occupies residues 1–25; sequence MFRRNLITSAILLMAPLAFSAQSLA. A disordered region spans residues 52-82; it reads KDEEKKKYTPATVNRSVSTNDQGYAANPFPT. A compositionally biased stretch (polar residues) spans 62 to 73; sequence ATVNRSVSTNDQ.

It belongs to the porin LamB (TC 1.B.3) family.

The protein localises to the cell outer membrane. In terms of biological role, may be a sugar porin with a broad carbohydrate specificity. In Shigella flexneri serotype 5b (strain 8401), this protein is Putative outer membrane porin BglH (bglH).